Here is a 201-residue protein sequence, read N- to C-terminus: LIM domain-containing protein PLIM2b (201 aa).

2 consecutive LIM zinc-binding domains span residues 8 to 68 (DKCT…LFKE) and 103 to 163 (DKCA…LFME). Residues 171-201 (KKKSESQEVLPEVVPEEQPAPPPPDENREDN) form a disordered region. A compositionally biased stretch (low complexity) spans 177-187 (QEVLPEVVPEE).

In terms of assembly, interacts with NEK3.

The protein is LIM domain-containing protein PLIM2b of Oryza sativa subsp. japonica (Rice).